Reading from the N-terminus, the 1057-residue chain is Carbamoyl phosphate synthase large chain (1057 aa).

Residues 1 to 401 (MPKRDDIQTI…SLLKAIRSLE (401 aa)) are carboxyphosphate synthetic domain. The ATP site is built by Arg-129, Arg-169, Gly-175, Gly-176, Lys-208, Ile-210, Glu-215, Gly-241, Ile-242, His-243, Gln-284, and Glu-298. The region spanning 133 to 327 (RSLMNDLNVP…IAKLAAKIAV (195 aa)) is the ATP-grasp 1 domain. Mg(2+) contacts are provided by Gln-284, Glu-298, and Asn-300. Mn(2+) is bound by residues Gln-284, Glu-298, and Asn-300. The interval 402–546 (YGVHHLGLPN…YGTYETENES (145 aa)) is oligomerization domain. The tract at residues 547 to 929 (IVTDKEKILV…ALYKGLTGSG (383 aa)) is carbamoyl phosphate synthetic domain. Positions 671 to 861 (EALLHTIDVP…MAQLAMQAIM (191 aa)) constitute an ATP-grasp 2 domain. Arg-707, Arg-746, Leu-748, Glu-752, Gly-777, Val-778, His-779, Ser-780, Gln-820, and Glu-832 together coordinate ATP. Mg(2+) is bound by residues Gln-820, Glu-832, and Asn-834. Gln-820, Glu-832, and Asn-834 together coordinate Mn(2+). The region spanning 930-1057 (VEVKDHGTVL…ESMTFSMRTM (128 aa)) is the MGS-like domain. The allosteric domain stretch occupies residues 930–1057 (VEVKDHGTVL…ESMTFSMRTM (128 aa)).

Belongs to the CarB family. Composed of two chains; the small (or glutamine) chain promotes the hydrolysis of glutamine to ammonia, which is used by the large (or ammonia) chain to synthesize carbamoyl phosphate. Tetramer of heterodimers (alpha,beta)4. It depends on Mg(2+) as a cofactor. Mn(2+) is required as a cofactor.

The catalysed reaction is hydrogencarbonate + L-glutamine + 2 ATP + H2O = carbamoyl phosphate + L-glutamate + 2 ADP + phosphate + 2 H(+). It carries out the reaction hydrogencarbonate + NH4(+) + 2 ATP = carbamoyl phosphate + 2 ADP + phosphate + 2 H(+). Its pathway is amino-acid biosynthesis; L-arginine biosynthesis; carbamoyl phosphate from bicarbonate: step 1/1. It functions in the pathway pyrimidine metabolism; UMP biosynthesis via de novo pathway; (S)-dihydroorotate from bicarbonate: step 1/3. Large subunit of the glutamine-dependent carbamoyl phosphate synthetase (CPSase). CPSase catalyzes the formation of carbamoyl phosphate from the ammonia moiety of glutamine, carbonate, and phosphate donated by ATP, constituting the first step of 2 biosynthetic pathways, one leading to arginine and/or urea and the other to pyrimidine nucleotides. The large subunit (synthetase) binds the substrates ammonia (free or transferred from glutamine from the small subunit), hydrogencarbonate and ATP and carries out an ATP-coupled ligase reaction, activating hydrogencarbonate by forming carboxy phosphate which reacts with ammonia to form carbamoyl phosphate. This is Carbamoyl phosphate synthase large chain from Staphylococcus haemolyticus (strain JCSC1435).